Reading from the N-terminus, the 176-residue chain is Small ribosomal subunit protein uS5 (176 aa).

Residues 11–74 (LSEVLVDVNR…QAAKKRMMKV (64 aa)) enclose the S5 DRBM domain.

It belongs to the universal ribosomal protein uS5 family. As to quaternary structure, part of the 30S ribosomal subunit. Contacts proteins S4 and S8.

With S4 and S12 plays an important role in translational accuracy. In terms of biological role, located at the back of the 30S subunit body where it stabilizes the conformation of the head with respect to the body. In Rickettsia conorii (strain ATCC VR-613 / Malish 7), this protein is Small ribosomal subunit protein uS5.